Here is a 370-residue protein sequence, read N- to C-terminus: Death-associated protein kinase 2 (370 aa).

The Protein kinase domain maps to 23–285; the sequence is YDIGEELGSG…IQEALRHPWI (263 aa). ATP contacts are provided by residues 29–37 and Lys-52; that span reads LGSGQFAIV. The active-site Proton acceptor is Asp-149. Residues 277–344 form a calmodulin-binding region; it reads QEALRHPWIT…KVHLRPDEDL (68 aa). The segment at 292–301 is autoinhibitory domain; it reads QAMVRRESVV. Position 299 is a phosphoserine (Ser-299). Ser-318 is subject to Phosphoserine; by autocatalysis. The disordered stretch occupies residues 348–370; sequence ESDTEEDIARRKALHPRRRSSTS. Residue Ser-349 is modified to Phosphoserine. Residues 358–370 show a composition bias toward basic residues; the sequence is RKALHPRRRSSTS. Position 369 is a phosphothreonine; by PKB/AKT1 (Thr-369).

It belongs to the protein kinase superfamily. CAMK Ser/Thr protein kinase family. DAP kinase subfamily. In terms of assembly, homodimer in its autoinhibited state. Active as monomer. Isoform 2 but not isoform 1 can interact with ATF4. Interacts with 14-3-3 proteins YWHAB, YWHAE, YWHAG, YWHAH, YWHAQ, YWHAZ and SFN; the interaction requires DAPK2 phosphorylation at Thr-369 and suppresses DAPK2 kinase activity and DAPK2-induced apoptosis. It depends on Mg(2+) as a cofactor. In terms of processing, autophosphorylation at Ser-318 inhibits its catalytic activity. Dephosphorylated at Ser-318 in response to activated Fas and TNF-alpha receptors. In terms of tissue distribution, expressed in neutrophils and eosinophils. Isoform 2 is expressed in embryonic stem cells (at protein level). Isoform 1 is ubiquitously expressed in all tissue types examined with high levels in heart, lung and skeletal muscle.

It localises to the cytoplasm. The protein resides in the cytoplasmic vesicle. It is found in the autophagosome lumen. It catalyses the reaction L-seryl-[protein] + ATP = O-phospho-L-seryl-[protein] + ADP + H(+). The catalysed reaction is L-threonyl-[protein] + ATP = O-phospho-L-threonyl-[protein] + ADP + H(+). Its activity is regulated as follows. Activated by Ca(2+)/calmodulin. Regulated by a double locking mechanism, involving autophosphorylation at Ser-318, calmodulin binding, and dimerization. In the inactive state, Ser-318 is phosphorylated, and the kinase is dimeric. Activation involves: dephosphorylation at Ser-318, release-of-autoinhibition mechanism where calmodulin binding induces a conformational change that relieves the steric block of the active site by the autoinhibitory domain, and generation of the monomeric active form of the kinase. Calcium/calmodulin-dependent serine/threonine kinase involved in multiple cellular signaling pathways that trigger cell survival, apoptosis, and autophagy. Regulates both type I apoptotic and type II autophagic cell death signals, depending on the cellular setting. The former is caspase-dependent, while the latter is caspase-independent and is characterized by the accumulation of autophagic vesicles. Acts as a mediator of anoikis and a suppressor of beta-catenin-dependent anchorage-independent growth of malignant epithelial cells. May play a role in granulocytic maturation. Regulates granulocytic motility by controlling cell spreading and polarization. Functionally, isoform 2 is not regulated by calmodulin. It can phosphorylate MYL9. It can induce membrane blebbing and autophagic cell death. The polypeptide is Death-associated protein kinase 2 (DAPK2) (Homo sapiens (Human)).